The chain runs to 275 residues: HUWE1-associated protein modifying stress responses (275 aa).

The span at 32–44 shows a compositional bias: acidic residues; the sequence is AEQDEQLSPELQE. Disordered regions lie at residues 32–51, 155–181, 204–228, and 250–275; these read AEQD…AAAQ, RNSR…SSVE, SVRS…RRNG, and GTRK…NRML. The residue at position 167 (Ser-167) is a Phosphoserine. Over residues 172-181 the composition is skewed to low complexity; that stretch reads TSTETSSSVE. The span at 204–221 shows a compositional bias: polar residues; sequence SVRSSTPGSPTHVSSGPN. Phosphoserine is present on Ser-212.

It belongs to the HAPSTR1 family. Homooligomer. Heterooligomer with HAPSTR2; the interaction is direct and stabilizes HAPSTR1. Interacts with HUWE1. Post-translationally, ubiquitinated by HUWE1. Promotes HAPSTR1 degradation through polyubiquitination.

The protein resides in the nucleus. The protein localises to the cytoplasm. Functionally, acts as a central player within a network of stress response pathways promoting cellular adaptability. The E3 ligase HUWE1 assists HAPSTR1 in controlling stress signaling and in turn, HUWE1 feeds back to promote the degradation of HAPSTR1. HAPSTR1 represents a central coordination mechanism for stress response programs. Functions as a negative regulator of TP53/P53 in the cellular response to telomere erosion and probably also DNA damage. May attenuate p53/TP53 activation through the E3 ubiquitin ligase HUWE1. The polypeptide is HUWE1-associated protein modifying stress responses (Mus musculus (Mouse)).